The following is a 254-amino-acid chain: Gamma-glutamyl-gamma-aminobutyrate hydrolase (254 aa).

The region spanning 16 to 250 (RNRLKGHATQ…ITAWQHHIAE (235 aa)) is the Glutamine amidotransferase type-1 domain. C114 functions as the Nucleophile in the catalytic mechanism. Active-site residues include H222 and E224.

It belongs to the peptidase C26 family.

It carries out the reaction 4-(gamma-L-glutamylamino)butanoate + H2O = 4-aminobutanoate + L-glutamate. It functions in the pathway amine and polyamine degradation; putrescine degradation; 4-aminobutanoate from putrescine: step 4/4. In terms of biological role, involved in the breakdown of putrescine via hydrolysis of the gamma-glutamyl linkage of gamma-glutamyl-gamma-aminobutyrate. This is Gamma-glutamyl-gamma-aminobutyrate hydrolase (puuD) from Shigella flexneri.